The primary structure comprises 71 residues: UPF0435 protein SE_1565 (71 aa).

This sequence belongs to the UPF0435 family.

The sequence is that of UPF0435 protein SE_1565 from Staphylococcus epidermidis (strain ATCC 12228 / FDA PCI 1200).